The chain runs to 238 residues: Ribonuclease PH (238 aa).

Residues Arg-86 and 124–126 (GTR) each bind phosphate.

This sequence belongs to the RNase PH family. In terms of assembly, homohexameric ring arranged as a trimer of dimers.

The enzyme catalyses tRNA(n+1) + phosphate = tRNA(n) + a ribonucleoside 5'-diphosphate. In terms of biological role, phosphorolytic 3'-5' exoribonuclease that plays an important role in tRNA 3'-end maturation. Removes nucleotide residues following the 3'-CCA terminus of tRNAs; can also add nucleotides to the ends of RNA molecules by using nucleoside diphosphates as substrates, but this may not be physiologically important. Probably plays a role in initiation of 16S rRNA degradation (leading to ribosome degradation) during starvation. This is Ribonuclease PH from Geotalea daltonii (strain DSM 22248 / JCM 15807 / FRC-32) (Geobacter daltonii).